We begin with the raw amino-acid sequence, 171 residues long: 3-hydroxydecanoyl-[acyl-carrier-protein] dehydratase (171 aa).

Residue H70 is part of the active site.

Belongs to the thioester dehydratase family. FabA subfamily. In terms of assembly, homodimer.

The protein resides in the cytoplasm. The catalysed reaction is a (3R)-hydroxyacyl-[ACP] = a (2E)-enoyl-[ACP] + H2O. It catalyses the reaction (3R)-hydroxydecanoyl-[ACP] = (2E)-decenoyl-[ACP] + H2O. It carries out the reaction (2E)-decenoyl-[ACP] = (3Z)-decenoyl-[ACP]. Its pathway is lipid metabolism; fatty acid biosynthesis. In terms of biological role, necessary for the introduction of cis unsaturation into fatty acids. Catalyzes the dehydration of (3R)-3-hydroxydecanoyl-ACP to E-(2)-decenoyl-ACP and then its isomerization to Z-(3)-decenoyl-ACP. Can catalyze the dehydratase reaction for beta-hydroxyacyl-ACPs with saturated chain lengths up to 16:0, being most active on intermediate chain length. The protein is 3-hydroxydecanoyl-[acyl-carrier-protein] dehydratase of Chromohalobacter salexigens (strain ATCC BAA-138 / DSM 3043 / CIP 106854 / NCIMB 13768 / 1H11).